The sequence spans 425 residues: Serine--tRNA ligase (425 aa).

230–232 (TAE) contacts L-serine. 261–263 (RAE) provides a ligand contact to ATP. An L-serine-binding site is contributed by glutamate 284. Residue 348–351 (EISS) coordinates ATP. Serine 384 contacts L-serine.

This sequence belongs to the class-II aminoacyl-tRNA synthetase family. Type-1 seryl-tRNA synthetase subfamily. As to quaternary structure, homodimer. The tRNA molecule binds across the dimer.

It is found in the cytoplasm. The catalysed reaction is tRNA(Ser) + L-serine + ATP = L-seryl-tRNA(Ser) + AMP + diphosphate + H(+). It carries out the reaction tRNA(Sec) + L-serine + ATP = L-seryl-tRNA(Sec) + AMP + diphosphate + H(+). It participates in aminoacyl-tRNA biosynthesis; selenocysteinyl-tRNA(Sec) biosynthesis; L-seryl-tRNA(Sec) from L-serine and tRNA(Sec): step 1/1. Catalyzes the attachment of serine to tRNA(Ser). Is also able to aminoacylate tRNA(Sec) with serine, to form the misacylated tRNA L-seryl-tRNA(Sec), which will be further converted into selenocysteinyl-tRNA(Sec). The protein is Serine--tRNA ligase of Desulforudis audaxviator (strain MP104C).